Here is a 107-residue protein sequence, read N- to C-terminus: Serine-rich and transmembrane domain-containing protein 1 (107 aa).

The helical transmembrane segment at 43-63 threads the bilayer; it reads IYVSIFLSLLAFLLLLLIIAL.

The protein resides in the membrane. This Mus musculus (Mouse) protein is Serine-rich and transmembrane domain-containing protein 1 (Sertm1).